A 167-amino-acid chain; its full sequence is Large ribosomal subunit protein uL10 (167 aa).

This sequence belongs to the universal ribosomal protein uL10 family. In terms of assembly, part of the ribosomal stalk of the 50S ribosomal subunit. The N-terminus interacts with L11 and the large rRNA to form the base of the stalk. The C-terminus forms an elongated spine to which L12 dimers bind in a sequential fashion forming a multimeric L10(L12)X complex.

Forms part of the ribosomal stalk, playing a central role in the interaction of the ribosome with GTP-bound translation factors. This is Large ribosomal subunit protein uL10 from Dichelobacter nodosus (strain VCS1703A).